Reading from the N-terminus, the 168-residue chain is GTP-dependent dephospho-CoA kinase (168 aa).

Positions 49, 50, 51, 68, 70, and 120 each coordinate GTP.

It belongs to the GTP-dependent DPCK family.

The enzyme catalyses 3'-dephospho-CoA + GTP = GDP + CoA + H(+). It functions in the pathway cofactor biosynthesis; coenzyme A biosynthesis. In terms of biological role, catalyzes the GTP-dependent phosphorylation of the 3'-hydroxyl group of dephosphocoenzyme A to form coenzyme A (CoA). In Pyrobaculum neutrophilum (strain DSM 2338 / JCM 9278 / NBRC 100436 / V24Sta) (Thermoproteus neutrophilus), this protein is GTP-dependent dephospho-CoA kinase.